A 330-amino-acid chain; its full sequence is Probable L-asparaginase (330 aa).

Positions 6-330 constitute an Asparaginase/glutaminase domain; the sequence is PTIALLATGG…EKIQEMFEEY (325 aa). The active-site O-isoaspartyl threonine intermediate is the Thr16. Substrate-binding positions include Ser62 and 95–96; that span reads TD.

Belongs to the asparaginase 1 family.

Its subcellular location is the cytoplasm. The enzyme catalyses L-asparagine + H2O = L-aspartate + NH4(+). The chain is Probable L-asparaginase (ansA) from Helicobacter pylori (strain ATCC 700392 / 26695) (Campylobacter pylori).